The primary structure comprises 214 residues: MAGAACCFSDEQFREACAELQKPALTGADWQLLVEASGITIYRLLDQPSGLYEYKVFGVLEGCSPALLTDVYMDLDYRKQWDQYVKELYEKESDEQMVAYWEVKYPFPLSNRDYVYTRQRRDLDVDRRKIYVVLAQSISAPQFPEKSGVIRVKQYKQSLAIESDGKKGSRVFMYYFDNPGGQIPSWLINWAAKNGVPNFLKDMVKACQNYHKKT.

An N-acetylmethionine modification is found at Met1. The region spanning 1–212 is the START domain; that stretch reads MAGAACCFSD…MVKACQNYHK (212 aa). A 1,2-diacyl-sn-glycero-3-phosphocholine contacts are provided by Tyr72 and Arg78. At Ser139 the chain carries Phosphoserine. Gln157 is a binding site for a 1,2-diacyl-sn-glycero-3-phosphocholine.

In terms of assembly, interacts with ACOT13/THEM2. As to expression, abundant in liver of pups but levels in liver decrease 10-fold about 2 weeks after birth. In adult, highly expressed in epididymis, testis, kidney and bone-marrow derived mast cells.

Its subcellular location is the cytoplasm. Its function is as follows. Catalyzes the transfer of phosphatidylcholine between membranes. Binds a single lipid molecule. The sequence is that of Phosphatidylcholine transfer protein (Pctp) from Mus musculus (Mouse).